Reading from the N-terminus, the 195-residue chain is Translation machinery-associated protein 22 (195 aa).

The 72-residue stretch at 94 to 165 folds into the SUI1 domain; it reads VLIKRIERNR…EAKEYIEKLL (72 aa). Positions 176–195 are disordered; it reads EQVDEKKKKKATAPGATPAA.

Belongs to the DENR family. As to quaternary structure, interacts with the 40S ribosomal subunit.

It is found in the cytoplasm. This Scheffersomyces stipitis (strain ATCC 58785 / CBS 6054 / NBRC 10063 / NRRL Y-11545) (Yeast) protein is Translation machinery-associated protein 22 (TMA22).